Here is a 126-residue protein sequence, read N- to C-terminus: Large ribosomal subunit protein bL12 (126 aa).

It belongs to the bacterial ribosomal protein bL12 family. As to quaternary structure, homodimer. Part of the ribosomal stalk of the 50S ribosomal subunit. Forms a multimeric L10(L12)X complex, where L10 forms an elongated spine to which 2 to 4 L12 dimers bind in a sequential fashion. Binds GTP-bound translation factors.

Its function is as follows. Forms part of the ribosomal stalk which helps the ribosome interact with GTP-bound translation factors. Is thus essential for accurate translation. The sequence is that of Large ribosomal subunit protein bL12 from Prosthecochloris aestuarii (strain DSM 271 / SK 413).